We begin with the raw amino-acid sequence, 142 residues long: Putative pre-16S rRNA nuclease (142 aa).

Belongs to the YqgF nuclease family.

The protein resides in the cytoplasm. In terms of biological role, could be a nuclease involved in processing of the 5'-end of pre-16S rRNA. The polypeptide is Putative pre-16S rRNA nuclease (Desulfitobacterium hafniense (strain DSM 10664 / DCB-2)).